A 340-amino-acid chain; its full sequence is tRNA-dihydrouridine(20/20a) synthase (340 aa).

Residues 22-24 (PMM) and Gln-75 each bind FMN. Residue Cys-105 is the Proton donor of the active site. FMN contacts are provided by residues Lys-144, His-177, 217 to 219 (NGG), and 239 to 240 (GR).

It belongs to the Dus family. DusA subfamily. The cofactor is FMN.

The enzyme catalyses 5,6-dihydrouridine(20) in tRNA + NADP(+) = uridine(20) in tRNA + NADPH + H(+). It catalyses the reaction 5,6-dihydrouridine(20) in tRNA + NAD(+) = uridine(20) in tRNA + NADH + H(+). It carries out the reaction 5,6-dihydrouridine(20a) in tRNA + NADP(+) = uridine(20a) in tRNA + NADPH + H(+). The catalysed reaction is 5,6-dihydrouridine(20a) in tRNA + NAD(+) = uridine(20a) in tRNA + NADH + H(+). In terms of biological role, catalyzes the synthesis of 5,6-dihydrouridine (D), a modified base found in the D-loop of most tRNAs, via the reduction of the C5-C6 double bond in target uridines. Specifically modifies U20 and U20a in tRNAs. This Xylella fastidiosa (strain 9a5c) protein is tRNA-dihydrouridine(20/20a) synthase.